The following is a 381-amino-acid chain: 4-hydroxy-3-methylbut-2-en-1-yl diphosphate synthase (flavodoxin) (381 aa).

The [4Fe-4S] cluster site is built by Cys-280, Cys-283, Cys-315, and Glu-322.

It belongs to the IspG family. The cofactor is [4Fe-4S] cluster.

It carries out the reaction (2E)-4-hydroxy-3-methylbut-2-enyl diphosphate + oxidized [flavodoxin] + H2O + 2 H(+) = 2-C-methyl-D-erythritol 2,4-cyclic diphosphate + reduced [flavodoxin]. The protein operates within isoprenoid biosynthesis; isopentenyl diphosphate biosynthesis via DXP pathway; isopentenyl diphosphate from 1-deoxy-D-xylulose 5-phosphate: step 5/6. In terms of biological role, converts 2C-methyl-D-erythritol 2,4-cyclodiphosphate (ME-2,4cPP) into 1-hydroxy-2-methyl-2-(E)-butenyl 4-diphosphate. This is 4-hydroxy-3-methylbut-2-en-1-yl diphosphate synthase (flavodoxin) from Clavibacter michiganensis subsp. michiganensis (strain NCPPB 382).